The primary structure comprises 425 residues: FLEQQNKVLETKWKLLQEQGTKGTTKRANLDPLFEKYIADLKKYLDNLISEKGRLQQELKNLQLLVEDYKKKYEDEINKRTKAENDFVLLKKDVDAAYMVKTELEAKVDTLTSEINFLRTRDAAELSQVHDQVTDTSVVLTMDNNRDLNLDSIIKEVKCQYEQIAQRSKLEAEALYDQKYKQLQQTVEGHGDSIKNSKTEISDLNRKIQRLKAEIENVKKQIASLNQSIAGAEERGNLSLKDAEKKLKDLEDAERKLKADMARQLKEYQELMSAKLALNLEISTYRYMLEGEEGRISGQIVNKVSISVLSGGSSVYTALGGAAGGMGGGGGGGMGSGHGGGYGGMVFGGGMGCGMGDGMGGGGMGGGMGSGHGGGYGHGGAVCFGAGGMGYEGGSMHGGGSSYGHSGGKTSVAIASTTSTTKKTY.

The segment at 1–16 (FLEQQNKVLETKWKLL) is coil 1A. The IF rod domain maps to 1-296 (FLEQQNKVLE…YMLEGEEGRI (296 aa)). A linker 1 region spans residues 17-37 (QEQGTKGTTKRANLDPLFEKY). Residues 38-129 (IADLKKYLDN…TRDAAELSQV (92 aa)) are coil 1B. Positions 130–153 (HDQVTDTSVVLTMDNNRDLNLDSI) are linker 12. The tract at residues 154–292 (IKEVKCQYEQ…STYRYMLEGE (139 aa)) is coil 2. A tail region spans residues 293–425 (EGRISGQIVN…STTSTTKKTY (133 aa)).

This sequence belongs to the intermediate filament family. Heterotetramer of two type I and two type II keratins.

In Xenopus laevis (African clawed frog), this protein is Keratin, type II cytoskeletal I.